Reading from the N-terminus, the 324-residue chain is Glyoxylate/hydroxypyruvate reductase B (324 aa).

Residues Arg-237 and Glu-266 contribute to the active site. The active-site Proton donor is His-285.

This sequence belongs to the D-isomer specific 2-hydroxyacid dehydrogenase family. GhrB subfamily. Homodimer.

The protein resides in the cytoplasm. It carries out the reaction glycolate + NADP(+) = glyoxylate + NADPH + H(+). It catalyses the reaction (R)-glycerate + NAD(+) = 3-hydroxypyruvate + NADH + H(+). The catalysed reaction is (R)-glycerate + NADP(+) = 3-hydroxypyruvate + NADPH + H(+). In terms of biological role, catalyzes the NADPH-dependent reduction of glyoxylate and hydroxypyruvate into glycolate and glycerate, respectively. The sequence is that of Glyoxylate/hydroxypyruvate reductase B from Salmonella choleraesuis (strain SC-B67).